Consider the following 357-residue polypeptide: Probable butyrate kinase (357 aa).

This sequence belongs to the acetokinase family.

It is found in the cytoplasm. The enzyme catalyses butanoate + ATP = butanoyl phosphate + ADP. In Thermotoga petrophila (strain ATCC BAA-488 / DSM 13995 / JCM 10881 / RKU-1), this protein is Probable butyrate kinase.